Consider the following 361-residue polypeptide: Chorismate synthase (361 aa).

Arg48 serves as a coordination point for NADP(+). FMN-binding positions include 125–127 (RSS), 238–239 (NA), Gly278, 293–297 (KPTSS), and Arg319.

It belongs to the chorismate synthase family. Homotetramer. FMNH2 serves as cofactor.

The catalysed reaction is 5-O-(1-carboxyvinyl)-3-phosphoshikimate = chorismate + phosphate. The protein operates within metabolic intermediate biosynthesis; chorismate biosynthesis; chorismate from D-erythrose 4-phosphate and phosphoenolpyruvate: step 7/7. Functionally, catalyzes the anti-1,4-elimination of the C-3 phosphate and the C-6 proR hydrogen from 5-enolpyruvylshikimate-3-phosphate (EPSP) to yield chorismate, which is the branch point compound that serves as the starting substrate for the three terminal pathways of aromatic amino acid biosynthesis. This reaction introduces a second double bond into the aromatic ring system. The protein is Chorismate synthase of Vibrio anguillarum (strain ATCC 68554 / 775) (Listonella anguillarum).